Here is a 166-residue protein sequence, read N- to C-terminus: Protein-export protein SecB (166 aa).

The protein belongs to the SecB family. As to quaternary structure, homotetramer, a dimer of dimers. One homotetramer interacts with 1 SecA dimer.

It is found in the cytoplasm. In terms of biological role, one of the proteins required for the normal export of preproteins out of the cell cytoplasm. It is a molecular chaperone that binds to a subset of precursor proteins, maintaining them in a translocation-competent state. It also specifically binds to its receptor SecA. This is Protein-export protein SecB from Cereibacter sphaeroides (strain ATCC 17025 / ATH 2.4.3) (Rhodobacter sphaeroides).